Reading from the N-terminus, the 421-residue chain is Serine hydroxymethyltransferase (421 aa).

(6S)-5,6,7,8-tetrahydrofolate contacts are provided by residues L121 and 125–127 (GHL). Residue K230 is modified to N6-(pyridoxal phosphate)lysine. (6S)-5,6,7,8-tetrahydrofolate-binding positions include E246 and 354–356 (SPF).

This sequence belongs to the SHMT family. In terms of assembly, homodimer. The cofactor is pyridoxal 5'-phosphate.

The protein resides in the cytoplasm. It catalyses the reaction (6R)-5,10-methylene-5,6,7,8-tetrahydrofolate + glycine + H2O = (6S)-5,6,7,8-tetrahydrofolate + L-serine. Its pathway is one-carbon metabolism; tetrahydrofolate interconversion. It functions in the pathway amino-acid biosynthesis; glycine biosynthesis; glycine from L-serine: step 1/1. In terms of biological role, catalyzes the reversible interconversion of serine and glycine with tetrahydrofolate (THF) serving as the one-carbon carrier. This reaction serves as the major source of one-carbon groups required for the biosynthesis of purines, thymidylate, methionine, and other important biomolecules. Also exhibits THF-independent aldolase activity toward beta-hydroxyamino acids, producing glycine and aldehydes, via a retro-aldol mechanism. This Rickettsia felis (strain ATCC VR-1525 / URRWXCal2) (Rickettsia azadi) protein is Serine hydroxymethyltransferase.